The chain runs to 643 residues: Probable extracellular metalloproteinase 4 (643 aa).

Residues 1 to 18 (MHGLLLAGLLALPLNVFA) form the signal peptide. Residues 19 to 254 (HPTESHSSGV…VHSVVDYVSA (236 aa)) constitute a propeptide that is removed on maturation. The segment at 49 to 69 (SDAVPKQDGESFTTSSTGDDN) is disordered. Polar residues predominate over residues 58 to 69 (ESFTTSSTGDDN). N-linked (GlcNAc...) asparagine glycans are attached at residues Asn271 and Asn420. His437 provides a ligand contact to Zn(2+). The active site involves Glu438. His441 is a Zn(2+) binding site. Asn603 and Asn629 each carry an N-linked (GlcNAc...) asparagine glycan.

The protein belongs to the peptidase M36 family. Requires Zn(2+) as cofactor.

It is found in the secreted. Secreted metalloproteinase probably acting as a virulence factor. The protein is Probable extracellular metalloproteinase 4 (MEP4) of Trichophyton verrucosum (strain HKI 0517).